The chain runs to 96 residues: Co-chaperonin GroES (96 aa).

This sequence belongs to the GroES chaperonin family. As to quaternary structure, heptamer of 7 subunits arranged in a ring. Interacts with the chaperonin GroEL.

The protein localises to the cytoplasm. Functionally, together with the chaperonin GroEL, plays an essential role in assisting protein folding. The GroEL-GroES system forms a nano-cage that allows encapsulation of the non-native substrate proteins and provides a physical environment optimized to promote and accelerate protein folding. GroES binds to the apical surface of the GroEL ring, thereby capping the opening of the GroEL channel. This chain is Co-chaperonin GroES, found in Halorhodospira halophila (strain DSM 244 / SL1) (Ectothiorhodospira halophila (strain DSM 244 / SL1)).